A 433-amino-acid chain; its full sequence is Trigger factor (433 aa).

The 86-residue stretch at 163–248 (GDTVNIDFSG…VNEIKFKEVP (86 aa)) folds into the PPIase FKBP-type domain.

It belongs to the FKBP-type PPIase family. Tig subfamily.

Its subcellular location is the cytoplasm. It carries out the reaction [protein]-peptidylproline (omega=180) = [protein]-peptidylproline (omega=0). Functionally, involved in protein export. Acts as a chaperone by maintaining the newly synthesized protein in an open conformation. Functions as a peptidyl-prolyl cis-trans isomerase. The protein is Trigger factor of Staphylococcus aureus (strain COL).